Here is a 37-residue protein sequence, read N- to C-terminus: Photosystem I reaction center subunit VIII (37 aa).

The helical transmembrane segment at 7–27 threads the bilayer; that stretch reads LPSFFVPLVGLVFPAIAMASL.

It belongs to the PsaI family.

The protein localises to the plastid. It is found in the chloroplast thylakoid membrane. May help in the organization of the PsaL subunit. The polypeptide is Photosystem I reaction center subunit VIII (Eucalyptus globulus subsp. globulus (Tasmanian blue gum)).